The primary structure comprises 253 residues: Putative B3 domain-containing protein Os03g0619850 (253 aa).

Residues 26-119 constitute a DNA-binding region (TF-B3); it reads MSCFLIRMTT…CFEVMILDSD (94 aa). Disordered stretches follow at residues 126 to 150 and 230 to 253; these read LKSN…AGPP and HRDA…EQDS. The span at 230 to 239 shows a compositional bias: basic and acidic residues; the sequence is HRDADQERQM.

It localises to the nucleus. This chain is Putative B3 domain-containing protein Os03g0619850, found in Oryza sativa subsp. japonica (Rice).